The primary structure comprises 142 residues: MKTFMASPATIDRKWYVVDAEGKTLGRLASEVAKVLRGKNKAIFTPHIDTGDYVIVVNADKVKVTGKKLDQKIYYHHSDYIGGMKETTLREMMNKHPERVIEYAVKGMLPKGPLGRQMYTKLFVYAGPDHKHAAQKPETLEF.

It belongs to the universal ribosomal protein uL13 family. In terms of assembly, part of the 50S ribosomal subunit.

Functionally, this protein is one of the early assembly proteins of the 50S ribosomal subunit, although it is not seen to bind rRNA by itself. It is important during the early stages of 50S assembly. The protein is Large ribosomal subunit protein uL13 of Agathobacter rectalis (strain ATCC 33656 / DSM 3377 / JCM 17463 / KCTC 5835 / VPI 0990) (Eubacterium rectale).